Reading from the N-terminus, the 616-residue chain is UPF0329 protein ECU02_1540 (616 aa).

Basic and acidic residues-rich tracts occupy residues 350-359 (EREKREESKG) and 369-381 (GAGE…KEED). The interval 350–427 (EREKREESKG…RKGDGHHYKI (78 aa)) is disordered. Residues 382 to 396 (GKEEEGVEAEEEESA) show a composition bias toward acidic residues. The segment covering 408 to 427 (ARRKKSLKGKRKGDGHHYKI) has biased composition (basic residues).

This sequence belongs to the UPF0329 family.

The polypeptide is UPF0329 protein ECU02_1540 (Encephalitozoon cuniculi (strain GB-M1) (Microsporidian parasite)).